The sequence spans 706 residues: DNA helicase/primase complex-associated protein (706 aa).

The disordered stretch occupies residues 203 to 249; sequence CPGGDGGEEGDGAEGGDGGVGGAGDGAGAGGGSSGKPPAGKRGRPTR. Over residues 217 to 236 the composition is skewed to gly residues; it reads GGDGGVGGAGDGAGAGGGSS.

This sequence belongs to the herpesviridae HEPA family. Associates with the primase and the helicase to form the helicase-primase complex. Interacts with the origin-binding protein. Interacts with the polymerase catalytic subunit.

The protein resides in the host nucleus. In terms of biological role, component of the helicase/primase complex. Unwinds the DNA at the replication forks and generates single-stranded DNA for both leading and lagging strand synthesis. The primase synthesizes short RNA primers on the lagging strand that the polymerase presumably elongates using dNTPs. The primase-associated factor has no known catalytic activity in the complex and may serve to facilitate the formation of the replisome by directly interacting with the origin-binding protein and the polymerase. This is DNA helicase/primase complex-associated protein (40) from Equus caballus (Horse).